The primary structure comprises 574 residues: Proline--tRNA ligase (574 aa).

It belongs to the class-II aminoacyl-tRNA synthetase family. ProS type 1 subfamily. Homodimer.

Its subcellular location is the cytoplasm. It carries out the reaction tRNA(Pro) + L-proline + ATP = L-prolyl-tRNA(Pro) + AMP + diphosphate. Functionally, catalyzes the attachment of proline to tRNA(Pro) in a two-step reaction: proline is first activated by ATP to form Pro-AMP and then transferred to the acceptor end of tRNA(Pro). As ProRS can inadvertently accommodate and process non-cognate amino acids such as alanine and cysteine, to avoid such errors it has two additional distinct editing activities against alanine. One activity is designated as 'pretransfer' editing and involves the tRNA(Pro)-independent hydrolysis of activated Ala-AMP. The other activity is designated 'posttransfer' editing and involves deacylation of mischarged Ala-tRNA(Pro). The misacylated Cys-tRNA(Pro) is not edited by ProRS. This chain is Proline--tRNA ligase, found in Fervidobacterium nodosum (strain ATCC 35602 / DSM 5306 / Rt17-B1).